An 874-amino-acid polypeptide reads, in one-letter code: Alanine--tRNA ligase (874 aa).

The Zn(2+) site is built by His-562, His-566, Cys-664, and His-668.

Belongs to the class-II aminoacyl-tRNA synthetase family. Zn(2+) serves as cofactor.

The protein resides in the cytoplasm. The catalysed reaction is tRNA(Ala) + L-alanine + ATP = L-alanyl-tRNA(Ala) + AMP + diphosphate. Its function is as follows. Catalyzes the attachment of alanine to tRNA(Ala) in a two-step reaction: alanine is first activated by ATP to form Ala-AMP and then transferred to the acceptor end of tRNA(Ala). Also edits incorrectly charged Ser-tRNA(Ala) and Gly-tRNA(Ala) via its editing domain. In Shewanella putrefaciens (strain CN-32 / ATCC BAA-453), this protein is Alanine--tRNA ligase.